Here is a 333-residue protein sequence, read N- to C-terminus: tRNA N6-adenosine threonylcarbamoyltransferase (333 aa).

Fe cation-binding residues include histidine 111 and histidine 115. Substrate contacts are provided by residues 134–138 (LVSGG), aspartate 167, glycine 180, and asparagine 272. Position 300 (aspartate 300) interacts with Fe cation.

It belongs to the KAE1 / TsaD family. Fe(2+) is required as a cofactor.

The protein localises to the cytoplasm. The enzyme catalyses L-threonylcarbamoyladenylate + adenosine(37) in tRNA = N(6)-L-threonylcarbamoyladenosine(37) in tRNA + AMP + H(+). In terms of biological role, required for the formation of a threonylcarbamoyl group on adenosine at position 37 (t(6)A37) in tRNAs that read codons beginning with adenine. Is involved in the transfer of the threonylcarbamoyl moiety of threonylcarbamoyl-AMP (TC-AMP) to the N6 group of A37, together with TsaE and TsaB. TsaD likely plays a direct catalytic role in this reaction. This is tRNA N6-adenosine threonylcarbamoyltransferase from Legionella pneumophila (strain Lens).